The following is a 564-amino-acid chain: Proline--tRNA ligase (564 aa).

The protein belongs to the class-II aminoacyl-tRNA synthetase family. ProS type 1 subfamily. Homodimer.

It is found in the cytoplasm. The catalysed reaction is tRNA(Pro) + L-proline + ATP = L-prolyl-tRNA(Pro) + AMP + diphosphate. Functionally, catalyzes the attachment of proline to tRNA(Pro) in a two-step reaction: proline is first activated by ATP to form Pro-AMP and then transferred to the acceptor end of tRNA(Pro). As ProRS can inadvertently accommodate and process non-cognate amino acids such as alanine and cysteine, to avoid such errors it has two additional distinct editing activities against alanine. One activity is designated as 'pretransfer' editing and involves the tRNA(Pro)-independent hydrolysis of activated Ala-AMP. The other activity is designated 'posttransfer' editing and involves deacylation of mischarged Ala-tRNA(Pro). The misacylated Cys-tRNA(Pro) is not edited by ProRS. The polypeptide is Proline--tRNA ligase (Xylella fastidiosa (strain M12)).